A 183-amino-acid chain; its full sequence is Ribosome maturation factor RimP (183 aa).

The protein belongs to the RimP family.

Its subcellular location is the cytoplasm. In terms of biological role, required for maturation of 30S ribosomal subunits. The polypeptide is Ribosome maturation factor RimP (Mycobacterium bovis (strain ATCC BAA-935 / AF2122/97)).